Consider the following 311-residue polypeptide: Tyrosine recombinase XerC (311 aa).

Residues 14 to 100 form the Core-binding (CB) domain; the sequence is ESLNETAKKF…SLRTFYKVLL (87 aa). Residues 121 to 303 enclose the Tyr recombinase domain; sequence EVPKNFRINE…SKEKIKEVYR (183 aa). Residues R163, K187, H255, R258, and H281 contribute to the active site. Y290 acts as the O-(3'-phospho-DNA)-tyrosine intermediate in catalysis.

Belongs to the 'phage' integrase family. XerC subfamily. In terms of assembly, forms a cyclic heterotetrameric complex composed of two molecules of XerC and two molecules of XerD.

The protein resides in the cytoplasm. Its function is as follows. Site-specific tyrosine recombinase, which acts by catalyzing the cutting and rejoining of the recombining DNA molecules. The XerC-XerD complex is essential to convert dimers of the bacterial chromosome into monomers to permit their segregation at cell division. It also contributes to the segregational stability of plasmids. This Leptospira interrogans serogroup Icterohaemorrhagiae serovar copenhageni (strain Fiocruz L1-130) protein is Tyrosine recombinase XerC.